Here is a 409-residue protein sequence, read N- to C-terminus: Bone morphogenetic protein 4 (409 aa).

The first 19 residues, 1-19, serve as a signal peptide directing secretion; sequence MIPGNRMLMVVLLCQVLLG. Positions 20–293 are excised as a propeptide; sequence GASHASLIPE…ALTRRRRAKR (274 aa). Ser-91 carries the phosphoserine modification. 2 N-linked (GlcNAc...) asparagine glycosylation sites follow: Asn-144 and Asn-209. A disordered region spans residues 284-308; the sequence is ALTRRRRAKRSPKHHPQRARKKNKN. Intrachain disulfides connect Cys-309-Cys-374, Cys-338-Cys-406, and Cys-342-Cys-408. Residues Asn-351 and Asn-366 are each glycosylated (N-linked (GlcNAc...) asparagine).

Belongs to the TGF-beta family. In terms of assembly, homodimer; disulfide-linked. Interacts with GREM2. Part of a complex consisting of TWSG1 and CHRD. Interacts with the serine proteases, HTRA1 and HTRA3; the interaction with either inhibits BMP4-mediated signaling. The HTRA protease activity is required for this inhibition. Interacts with SOSTDC1. Interacts with FBN1 (via N-terminal domain) and FBN2. Interacts with type I receptor BMPR1A. Interacts with type II receptor BMPR2. Interacts with FSTL1; this interaction inhibits the activation of the BMP4/Smad1/5/8 signaling pathway. Interacts with TGFBR3.

It is found in the secreted. The protein localises to the extracellular space. Its subcellular location is the extracellular matrix. Growth factor of the TGF-beta superfamily that plays essential roles in many developmental processes, including neurogenesis, vascular development, angiogenesis and osteogenesis. Acts in concert with PTHLH/PTHRP to stimulate ductal outgrowth during embryonic mammary development and to inhibit hair follicle induction. Initiates the canonical BMP signaling cascade by associating with type I receptor BMPR1A and type II receptor BMPR2. Once all three components are bound together in a complex at the cell surface, BMPR2 phosphorylates and activates BMPR1A. In turn, BMPR1A propagates signal by phosphorylating SMAD1/5/8 that travel to the nucleus and act as activators and repressors of transcription of target genes. Positively regulates the expression of odontogenic development regulator MSX1 via inducing the IPO7-mediated import of SMAD1 to the nucleus. Required for MSX1-mediated mesenchymal molar tooth bud development beyond the bud stage, via promoting Wnt signaling. Acts as a positive regulator of odontoblast differentiation during mesenchymal tooth germ formation, expression is repressed during the bell stage by MSX1-mediated inhibition of CTNNB1 signaling. Able to induce its own expression in dental mesenchymal cells and also in the neighboring dental epithelial cells via an MSX1-mediated pathway. Can also signal through non-canonical BMP pathways such as ERK/MAP kinase, PI3K/Akt, or SRC cascades. For example, induces SRC phosphorylation which, in turn, activates VEGFR2, leading to an angiogenic response. The protein is Bone morphogenetic protein 4 of Suncus murinus (Asian house shrew).